A 289-amino-acid chain; its full sequence is Syntaxin-2 (289 aa).

The Cytoplasmic segment spans residues 1–265 (MRDRLPDLTA…KYQSKARRKK (265 aa)). Residues 68–101 (EGKIKEELEDLDKEIKKTANRIRGKLKSIEQSCD) adopt a coiled-coil conformation. One can recognise a t-SNARE coiled-coil homology domain in the interval 192 to 254 (LNEIESRHKD…EHAKEETKKA (63 aa)). The chain crosses the membrane as a helical; Anchor for type IV membrane protein span at residues 266 to 289 (WIIAAVAVAVIAVLALIIGLSVGK).

It belongs to the syntaxin family. Interacts with SYT6 and SYT8; the interaction is Ca(2+)-dependent.

Its subcellular location is the membrane. In terms of biological role, essential for epithelial morphogenesis. May mediate Ca(2+)-regulation of exocytosis acrosomal reaction in sperm. This is Syntaxin-2 (Stx2) from Mus musculus (Mouse).